Here is a 666-residue protein sequence, read N- to C-terminus: Probable potassium transport system protein Kup (666 aa).

Helical transmembrane passes span 16–36, 58–78, 99–119, 141–161, 167–187, 221–241, 253–273, 292–312, 343–363, 373–393, 402–422, and 424–444; these read GFIIALGIVYGDIGTSPLYTM, ISLIIWTLTLITTIKYVLVAL, TPWLIVPAVIGGATLLSDGAL, IFQNQSNVIFATLFILLLLFA, TGVIGKLFGPIMFIWFAFLGI, IFILGSIFLATTGAEALYSDL, WPFVKVAIILSYCGQGAWILA, FTMHVVILATLAAIIASQALI, TYIPVINWFLFAITTSIVLLF, YGLAITITMLMTTILLSFFLI, VLLMMIFFGILEGIFFLASAV, and FMHGGYVVVIIAVAIIFIMTI.

This sequence belongs to the HAK/KUP transporter (TC 2.A.72) family.

The protein localises to the cell membrane. The enzyme catalyses K(+)(in) + H(+)(in) = K(+)(out) + H(+)(out). Functionally, transport of potassium into the cell. Likely operates as a K(+):H(+) symporter. The sequence is that of Probable potassium transport system protein Kup from Streptococcus agalactiae serotype Ia (strain ATCC 27591 / A909 / CDC SS700).